Consider the following 706-residue polypeptide: Lethal(3)malignant brain tumor-like protein 2 (706 aa).

The segment at 1 to 85 (MEKPRGVEET…GTPRSLDGSG (85 aa)) is disordered. Ser13 bears the Phosphoserine mark. Positions 15–26 (PMEEEEEDDDLE) are enriched in acidic residues. The segment covering 39 to 50 (SSAGSESSSYLE) has biased composition (low complexity). A compositionally biased stretch (basic and acidic residues) spans 54-63 (EAEHEDREAG). At Ser68 the chain carries Phosphoserine. Residue Thr77 is modified to Phosphothreonine. The segment at 82–117 (DGSGSEPAVCEMCGIVGTREAFFSKTKRFCSVSCSR) adopts an FCS-type zinc-finger fold. Residues Cys91, Cys94, Cys111, and Cys115 each coordinate Zn(2+). MBT repeat units follow at residues 180–284 (FDWG…LVPP), 292–392 (TDWK…IKLS), 398–501 (MAHH…LTPP), and 509–605 (FSWE…LQPP). Ser339 is modified (phosphoserine). Residue Lys406 forms a Glycyl lysine isopeptide (Lys-Gly) (interchain with G-Cter in SUMO2) linkage. The disordered stretch occupies residues 606-669 (VATEPTTPLK…KAPSEPAPDE (64 aa)). The span at 620-635 (TKKKKKQFGKKRKRIP) shows a compositional bias: basic residues. Residues Lys648, Lys660, and Lys676 each participate in a glycyl lysine isopeptide (Lys-Gly) (interchain with G-Cter in SUMO2) cross-link. Residues 685–706 (ADKALSPELPVPVENIKQETDD) are disordered. A Phosphoserine modification is found at Ser690. Lys701 is covalently cross-linked (Glycyl lysine isopeptide (Lys-Gly) (interchain with G-Cter in SUMO1); alternate). A Glycyl lysine isopeptide (Lys-Gly) (interchain with G-Cter in SUMO2); alternate cross-link involves residue Lys701.

In terms of assembly, part of the E2F6.com-1 complex in G0 phase composed of E2F6, MGA, MAX, TFDP1, CBX3, BAT8, EUHMTASE1, RING1, RNF2, MBLR, BAT8 and YAF2.

The protein resides in the nucleus. Functionally, putative Polycomb group (PcG) protein. PcG proteins maintain the transcriptionally repressive state of genes, probably via a modification of chromatin, rendering it heritably changed in its expressibility. Its association with a chromatin-remodeling complex suggests that it may contribute to prevent expression of genes that trigger the cell into mitosis. Binds to monomethylated and dimethylated 'Lys-20' on histone H4. Binds histone H3 peptides that are monomethylated or dimethylated on 'Lys-4', 'Lys-9' or 'Lys-27'. This chain is Lethal(3)malignant brain tumor-like protein 2 (L3MBTL2), found in Bos taurus (Bovine).